The primary structure comprises 583 residues: Membrane protein insertase YidC (583 aa).

The chain crosses the membrane as a helical span at residues 5-25 (SVTGLALIALIMIVWLQFMSP). The tract at residues 28 to 50 (KSVQPDNRPKAQTTATVSQEKTE) is disordered. Positions 37-46 (KAQTTATVSQ) are enriched in polar residues. 5 consecutive transmembrane segments (helical) span residues 341–361 (PFAE…ISNY), 362–382 (GLII…LSMA), 427–447 (LGGC…FYVF), 477–497 (IPVY…TVFI), and 515–535 (LYIF…GLGL).

The protein belongs to the OXA1/ALB3/YidC family. Type 1 subfamily. As to quaternary structure, interacts with the Sec translocase complex via SecD. Specifically interacts with transmembrane segments of nascent integral membrane proteins during membrane integration.

The protein resides in the cell inner membrane. In terms of biological role, required for the insertion and/or proper folding and/or complex formation of integral membrane proteins into the membrane. Involved in integration of membrane proteins that insert both dependently and independently of the Sec translocase complex, as well as at least some lipoproteins. Aids folding of multispanning membrane proteins. This Chlorobium limicola (strain DSM 245 / NBRC 103803 / 6330) protein is Membrane protein insertase YidC.